The chain runs to 440 residues: Argininosuccinate lyase (440 aa).

Belongs to the lyase 1 family. Argininosuccinate lyase subfamily.

The protein resides in the cytoplasm. The enzyme catalyses 2-(N(omega)-L-arginino)succinate = fumarate + L-arginine. It functions in the pathway amino-acid biosynthesis; L-arginine biosynthesis; L-arginine from L-ornithine and carbamoyl phosphate: step 3/3. The protein is Argininosuccinate lyase of Clostridium botulinum (strain ATCC 19397 / Type A).